A 352-amino-acid chain; its full sequence is Mannonate dehydratase (352 aa).

Belongs to the mannonate dehydratase family. Fe(2+) serves as cofactor. Requires Mn(2+) as cofactor.

It carries out the reaction D-mannonate = 2-dehydro-3-deoxy-D-gluconate + H2O. It participates in carbohydrate metabolism; pentose and glucuronate interconversion. Its function is as follows. Catalyzes the dehydration of D-mannonate. This is Mannonate dehydratase from Paraburkholderia phytofirmans (strain DSM 17436 / LMG 22146 / PsJN) (Burkholderia phytofirmans).